The chain runs to 403 residues: Acetate kinase (403 aa).

Position 8 (N8) interacts with Mg(2+). An ATP-binding site is contributed by K15. R90 is a binding site for substrate. The Proton donor/acceptor role is filled by D147. Residues 207-211 (HLGSG), 282-284 (DLR), and 330-334 (GVGEN) each bind ATP. E384 is a binding site for Mg(2+).

Belongs to the acetokinase family. Homodimer. Mg(2+) is required as a cofactor. Mn(2+) serves as cofactor.

The protein localises to the cytoplasm. The catalysed reaction is acetate + ATP = acetyl phosphate + ADP. The protein operates within metabolic intermediate biosynthesis; acetyl-CoA biosynthesis; acetyl-CoA from acetate: step 1/2. Its function is as follows. Catalyzes the formation of acetyl phosphate from acetate and ATP. Can also catalyze the reverse reaction. The chain is Acetate kinase from Exiguobacterium sp. (strain ATCC BAA-1283 / AT1b).